The following is a 1537-amino-acid chain: DNA-directed RNA polymerase subunit beta' (1537 aa).

Zn(2+) is bound by residues C57, C59, C72, and C75. Positions 746, 748, and 750 each coordinate Mg(2+). Residues C1120, C1201, C1208, and C1211 each coordinate Zn(2+). The tract at residues 1502-1537 (LEKYGQTSVSTDAVTGSQRYDDTRPSSTSINPSYGD) is disordered. Composition is skewed to polar residues over residues 1506 to 1519 (GQTS…TGSQ) and 1526 to 1537 (PSSTSINPSYGD).

It belongs to the RNA polymerase beta' chain family. The RNAP catalytic core consists of 2 alpha, 1 beta, 1 beta' and 1 omega subunit. When a sigma factor is associated with the core the holoenzyme is formed, which can initiate transcription. The cofactor is Mg(2+). Requires Zn(2+) as cofactor.

It carries out the reaction RNA(n) + a ribonucleoside 5'-triphosphate = RNA(n+1) + diphosphate. In terms of biological role, DNA-dependent RNA polymerase catalyzes the transcription of DNA into RNA using the four ribonucleoside triphosphates as substrates. The protein is DNA-directed RNA polymerase subunit beta' of Deinococcus geothermalis (strain DSM 11300 / CIP 105573 / AG-3a).